The chain runs to 427 residues: Serine hydroxymethyltransferase (427 aa).

(6S)-5,6,7,8-tetrahydrofolate-binding positions include leucine 122 and 126 to 128; that span reads GHL. Lysine 231 bears the N6-(pyridoxal phosphate)lysine mark. (6S)-5,6,7,8-tetrahydrofolate contacts are provided by residues glutamate 247 and 355–357; that span reads SPF.

Belongs to the SHMT family. In terms of assembly, homodimer. Pyridoxal 5'-phosphate is required as a cofactor.

It localises to the cytoplasm. It carries out the reaction (6R)-5,10-methylene-5,6,7,8-tetrahydrofolate + glycine + H2O = (6S)-5,6,7,8-tetrahydrofolate + L-serine. The protein operates within one-carbon metabolism; tetrahydrofolate interconversion. Its pathway is amino-acid biosynthesis; glycine biosynthesis; glycine from L-serine: step 1/1. In terms of biological role, catalyzes the reversible interconversion of serine and glycine with tetrahydrofolate (THF) serving as the one-carbon carrier. This reaction serves as the major source of one-carbon groups required for the biosynthesis of purines, thymidylate, methionine, and other important biomolecules. Also exhibits THF-independent aldolase activity toward beta-hydroxyamino acids, producing glycine and aldehydes, via a retro-aldol mechanism. In Microcystis aeruginosa (strain NIES-843 / IAM M-2473), this protein is Serine hydroxymethyltransferase.